A 197-amino-acid polypeptide reads, in one-letter code: ADP-ribosylation factor 1 (197 aa).

Gly2 carries N-myristoyl glycine lipidation. Residues 24 to 31, 67 to 71, and 126 to 129 each bind GTP; these read GLDAAGKT, DVGGQ, and NKQD.

The protein belongs to the small GTPase superfamily. Arf family.

The protein localises to the golgi apparatus. The catalysed reaction is GTP + H2O = GDP + phosphate + H(+). GTP-binding protein involved in protein trafficking; may modulate vesicle budding and uncoating within the Golgi apparatus. The sequence is that of ADP-ribosylation factor 1 from Solanum tuberosum (Potato).